The chain runs to 99 residues: NADH dehydrogenase [ubiquinone] 1 alpha subcomplex subunit 2 (99 aa).

Position 2 is an N-acetylalanine (A2). A disulfide bridge connects residues C24 and C58. K64 carries the post-translational modification N6-acetyllysine; alternate. K64 carries the N6-succinyllysine; alternate modification.

It belongs to the complex I NDUFA2 subunit family. Complex I is composed of 45 different subunits.

The protein localises to the mitochondrion inner membrane. In terms of biological role, accessory subunit of the mitochondrial membrane respiratory chain NADH dehydrogenase (Complex I), that is believed not to be involved in catalysis. Complex I functions in the transfer of electrons from NADH to the respiratory chain. The immediate electron acceptor for the enzyme is believed to be ubiquinone. In Homo sapiens (Human), this protein is NADH dehydrogenase [ubiquinone] 1 alpha subcomplex subunit 2 (NDUFA2).